The sequence spans 43 residues: SPbeta prophage-derived uncharacterized protein YopG (43 aa).

The protein is SPbeta prophage-derived uncharacterized protein YopG (yopG) of Bacillus subtilis (strain 168).